The chain runs to 522 residues: Sugar carrier protein A (522 aa).

At 1-22 (MAGGSLAPAGVAKERAEQYQGK) the chain is on the cytoplasmic side. 12 helical membrane-spanning segments follow: residues 23 to 43 (VTFAVFVACMVAAVGGSIFGY), 87 to 107 (AFTSSLYLAGLAASLVAGPIT), 121 to 141 (ISFLIGAALNATAINLAMLLL), 144 to 164 (IMLGVGIGFGNQAVPLYLSEM), 173 to 193 (LNIMFQLATTSGIFTANMVNY), 205 to 225 (LSLGLAAAPALLMTIGGLLLP), 286 to 306 (LVMAIFMPTFQILTGINIILF), 322 to 342 (ALYSSAVTGAVLCSSTFISIA), 351 to 371 (FLLISGGIQMITCQVIVAIIL), 384 to 404 (SFSVLVVIMICLFVLAFGWSW), 430 to 450 (AVNLFFTFVIAQSFPSLLCAF), and 453 to 473 (GIFLFFAGWVTVMTAFVYIFL). The Cytoplasmic portion of the chain corresponds to 474–522 (PETKGVPIEEMIFLWRKHWFWKKIVPGQPEVDDSRESMEMGEAVASRIK).

Belongs to the major facilitator superfamily. Sugar transporter (TC 2.A.1.1) family.

It is found in the membrane. This chain is Sugar carrier protein A (STA), found in Ricinus communis (Castor bean).